Consider the following 497-residue polypeptide: Maintenance of mitochondrial morphology protein 1 (497 aa).

The Lumenal segment spans residues 1-28 (MSSVLNPSSPHSWDLCCSSSSNRSYHRP). A helical transmembrane segment spans residues 29–55 (THPIVGLLVGQLSVVLLIGAFIKFFIF). The Cytoplasmic segment spans residues 56–497 (GEAPPSPSRS…GSLPDAVPIT (442 aa)). 4 disordered regions span residues 60 to 107 (PSPS…SSST), 284 to 330 (ESST…STTG), 402 to 421 (TGVR…AAGV), and 437 to 497 (EMLH…VPIT). The span at 66 to 77 (QTHRTSQHKRSY) shows a compositional bias: basic residues. The span at 81 to 94 (GARDLSPRTLKEKP) shows a compositional bias: basic and acidic residues. 3 stretches are compositionally biased toward polar residues: residues 95–107 (SSNV…SSST), 284–302 (ESST…NLRS), and 311–330 (PQES…STTG). Positions 140 to 393 (QPESLDWFNV…EPRVQVVALP (254 aa)) constitute an SMP-LTD domain. Residues 412-421 (DVSSSDAAGV) show a composition bias toward low complexity. Basic and acidic residues predominate over residues 440-451 (HAAREVDAEGLR). Positions 462 to 473 (GSSSKYAQQNQS) are enriched in polar residues. Basic and acidic residues predominate over residues 474 to 484 (SRERGRADDPF).

Belongs to the MMM1 family. Homodimer. Component of the ER-mitochondria encounter structure (ERMES) or MDM complex, composed of MMM1, MDM10, MDM12 and MDM34. An MMM1 homodimer associates with one molecule of MDM12 on each side in a pairwise head-to-tail manner, and the SMP-LTD domains of MMM1 and MDM12 generate a continuous hydrophobic tunnel for phospholipid trafficking.

The protein localises to the endoplasmic reticulum membrane. Component of the ERMES/MDM complex, which serves as a molecular tether to connect the endoplasmic reticulum (ER) and mitochondria. Components of this complex are involved in the control of mitochondrial shape and protein biogenesis, and function in nonvesicular lipid trafficking between the ER and mitochondria. The MDM12-MMM1 subcomplex functions in the major beta-barrel assembly pathway that is responsible for biogenesis of all outer membrane beta-barrel proteins, and acts in a late step after the SAM complex. The MDM10-MDM12-MMM1 subcomplex further acts in the TOM40-specific pathway after the action of the MDM12-MMM1 complex. Essential for establishing and maintaining the structure of mitochondria and maintenance of mtDNA nucleoids. This Uncinocarpus reesii (strain UAMH 1704) protein is Maintenance of mitochondrial morphology protein 1.